Here is a 396-residue protein sequence, read N- to C-terminus: Septu protein PtuA (396 aa).

Component of antiviral defense system Septu type I, composed of PtuA and PtuB. Expression of Septu type I in B.subtilis (strain BEST7003) confers resistance to phages SBSphiC and SBSphiJ. May be an ATPase. The chain is Septu protein PtuA from Bacillus thuringiensis.